The primary structure comprises 554 residues: Dihydroxy-acid dehydratase (554 aa).

Cysteine 48 provides a ligand contact to [2Fe-2S] cluster. Position 80 (aspartate 80) interacts with Mg(2+). Position 121 (cysteine 121) interacts with [2Fe-2S] cluster. Aspartate 122 and lysine 123 together coordinate Mg(2+). At lysine 123 the chain carries N6-carboxylysine. Cysteine 193 is a binding site for [2Fe-2S] cluster. Glutamate 444 is a Mg(2+) binding site. Serine 470 functions as the Proton acceptor in the catalytic mechanism.

The protein belongs to the IlvD/Edd family. In terms of assembly, homodimer. Requires [2Fe-2S] cluster as cofactor. Mg(2+) is required as a cofactor.

The enzyme catalyses (2R)-2,3-dihydroxy-3-methylbutanoate = 3-methyl-2-oxobutanoate + H2O. It carries out the reaction (2R,3R)-2,3-dihydroxy-3-methylpentanoate = (S)-3-methyl-2-oxopentanoate + H2O. It participates in amino-acid biosynthesis; L-isoleucine biosynthesis; L-isoleucine from 2-oxobutanoate: step 3/4. It functions in the pathway amino-acid biosynthesis; L-valine biosynthesis; L-valine from pyruvate: step 3/4. Functionally, functions in the biosynthesis of branched-chain amino acids. Catalyzes the dehydration of (2R,3R)-2,3-dihydroxy-3-methylpentanoate (2,3-dihydroxy-3-methylvalerate) into 2-oxo-3-methylpentanoate (2-oxo-3-methylvalerate) and of (2R)-2,3-dihydroxy-3-methylbutanoate (2,3-dihydroxyisovalerate) into 2-oxo-3-methylbutanoate (2-oxoisovalerate), the penultimate precursor to L-isoleucine and L-valine, respectively. The polypeptide is Dihydroxy-acid dehydratase (Tremblaya princeps).